An 864-amino-acid polypeptide reads, in one-letter code: Probable M1 family aminopeptidase 2 (864 aa).

Substrate is bound by residues glutamate 149 and glycine 289–asparagine 293. Histidine 325 contributes to the Zn(2+) binding site. The Proton acceptor role is filled by glutamate 326. Zn(2+)-binding residues include histidine 329 and glutamate 348.

Belongs to the peptidase M1 family. Requires Zn(2+) as cofactor.

The polypeptide is Probable M1 family aminopeptidase 2 (Encephalitozoon cuniculi (strain GB-M1) (Microsporidian parasite)).